The sequence spans 365 residues: PDZ and LIM domain protein 3 (365 aa).

In terms of domain architecture, PDZ spans 1–84; that stretch reads MPQNVILPGP…QLCLKIDRAE (84 aa). The residue at position 18 (Ser18) is a Phosphoserine. Residues 126-156 form a disordered region; that stretch reads FIIPGRSSGCSTPSGIDGGSGRSTPSSVSTL. A compositionally biased stretch (polar residues) spans 147–156; the sequence is RSTPSSVSTL. Residues 293–352 form the LIM zinc-binding domain; it reads PLCDKCGSGIVGAVVKARDKYRHPECFVCADCNLNLKQKGYFFVEGELYCETHARARMRP.

As to quaternary structure, interacts with ACTN2. Forms a heterodimer with PDLIM4 (via LIM domain).

It is found in the cytoplasm. The protein resides in the myofibril. It localises to the sarcomere. The protein localises to the z line. Functionally, may play a role in the organization of actin filament arrays within muscle cells. This is PDZ and LIM domain protein 3 (PDLIM3) from Sus scrofa (Pig).